We begin with the raw amino-acid sequence, 21 residues long: Cutinase 2 (21 aa).

Belongs to the cutinase family.

The protein localises to the secreted. The catalysed reaction is cutin + H2O = cutin monomers.. With respect to regulation, inhibited by diisopropyl fluorophosphate (DFP). Its function is as follows. Catalyzes the hydrolysis of complex carboxylic polyesters found in the cell wall of plants. Degrades cutin, a macromolecule that forms the structure of the plant cuticle. Allows pathogenic fungi to penetrate through the cuticular barrier into the host plant during the initial stage of fungal infection. The sequence is that of Cutinase 2 from Colletotrichum gloeosporioides (Anthracnose fungus).